The sequence spans 414 residues: MSGIIATYLIHDDSHNLEKKAEQIALGLTIGSWTHLPHLLQEQLKQHKGNVIHVEELAEHEHTNSYLRKKVKRGIIKIEYPLLNFSPDLPAILTTTFGKLSLDGEVKLIDLTFSDGLKKHFPGPKFGIDGIRNLLQVHDRPLLMSIFKGMIGRNIGYLKTQLRDQAIGGVDIVKDDEILFENALTPLTKRIVSGKEVLQSVYETYGHKTLYAVNVTGRTFDLKENAKRAVQAGADILLFNVFAYGLDVLQSLAEDDEIPVPIMAHPAVSGAYSASKLYGISSPLLLGKLLRYAGADFSLFPSPYGSVALEKEEALAISKYLTEDDVFFKKSFSVPSAGIHPGFVPFIIRDFGKDVVINAGGGIHGHPNGAQGGGKAFRTAIDATLQNKPLHEVDDINLHSALQIWGNPSHEVKL.

Lysine 99 acts as the Proton acceptor in catalysis. Residues lysine 148, 174–177, histidine 265, glycine 338, and 360–361 contribute to the substrate site; these read KDDE and GG. 3 residues coordinate Mg(2+): lysine 174, aspartate 176, and glutamate 177. Lysine 174 is subject to N6-carboxylysine.

Belongs to the RuBisCO large chain family. Type IV subfamily. Homodimer. Mg(2+) serves as cofactor.

The catalysed reaction is 5-methylsulfanyl-2,3-dioxopentyl phosphate = 2-hydroxy-5-methylsulfanyl-3-oxopent-1-enyl phosphate. The protein operates within amino-acid biosynthesis; L-methionine biosynthesis via salvage pathway; L-methionine from S-methyl-5-thio-alpha-D-ribose 1-phosphate: step 3/6. In terms of biological role, catalyzes the enolization of 2,3-diketo-5-methylthiopentyl-1-phosphate (DK-MTP-1-P) into 2-hydroxy-3-keto-5-methylthiopentenyl-1-phosphate (HK-MTPenyl-1-P). This Bacillus cereus (strain ZK / E33L) protein is 2,3-diketo-5-methylthiopentyl-1-phosphate enolase.